Consider the following 290-residue polypeptide: Protease HtpX (290 aa).

2 helical membrane passes run L6–F26 and I36–L56. H143 lines the Zn(2+) pocket. E144 is an active-site residue. H147 is a binding site for Zn(2+). A run of 2 helical transmembrane segments spans residues L158–I178 and I200–F220. Zn(2+) is bound at residue E225.

This sequence belongs to the peptidase M48B family. Requires Zn(2+) as cofactor.

The protein resides in the cell inner membrane. This is Protease HtpX from Aeromonas salmonicida (strain A449).